The sequence spans 239 residues: tRNA (guanine-N(1)-)-methyltransferase (239 aa).

S-adenosyl-L-methionine contacts are provided by residues G108 and 127–132 (LGDFVL).

This sequence belongs to the RNA methyltransferase TrmD family. Homodimer.

The protein localises to the cytoplasm. The catalysed reaction is guanosine(37) in tRNA + S-adenosyl-L-methionine = N(1)-methylguanosine(37) in tRNA + S-adenosyl-L-homocysteine + H(+). Its function is as follows. Specifically methylates guanosine-37 in various tRNAs. The polypeptide is tRNA (guanine-N(1)-)-methyltransferase (Streptococcus pyogenes serotype M6 (strain ATCC BAA-946 / MGAS10394)).